The chain runs to 743 residues: Cap-specific mRNA (nucleoside-2'-O-)-methyltransferase 2 (743 aa).

An Adrift-type SAM-dependent 2'-O-MTase domain is found at 113-326 (ELCTQAWAKF…LYIVCLDYQA (214 aa)). Lysine 121 is an active-site residue. S-adenosyl-L-methionine-binding residues include glycine 152, tryptophan 171, and aspartate 239. Residue aspartate 239 is part of the active site. The Proton acceptor role is filled by lysine 279.

Its subcellular location is the nucleus. The protein localises to the cytoplasm. It catalyses the reaction a 5'-end (N(7)-methyl 5'-triphosphoguanosine)-(2'-O-methyl-ribonucleoside)-(ribonucleotide) in mRNA + S-adenosyl-L-methionine = a 5'-end (N(7)-methyl 5'-triphosphoguanosine)-(2'-O-methyl-ribonucleoside)-(2'-O-methyl-ribonucleotide) in mRNA + S-adenosyl-L-homocysteine + H(+). S-adenosyl-L-methionine-dependent methyltransferase that mediates mRNA cap2 2'-O-ribose methylation to the 5'-cap structure of mRNAs. Methylates the ribose of the second nucleotide of a m(7)GpppG-capped mRNA and small nuclear RNA (snRNA) (cap0) to produce m(7)GpppRmpNm (cap2). The protein is Cap-specific mRNA (nucleoside-2'-O-)-methyltransferase 2 (cmtr2) of Danio rerio (Zebrafish).